The sequence spans 370 residues: tRNA-specific 2-thiouridylase MnmA (370 aa).

ATP-binding positions include Gly20–Ser27 and Met46. The tract at residues Asn106 to Asp108 is interaction with target base in tRNA. Cys111 (nucleophile) is an active-site residue. Cys111 and Cys207 are joined by a disulfide. Gly135 contacts ATP. Residues Lys157–Gln159 are interaction with tRNA. Catalysis depends on Cys207, which acts as the Cysteine persulfide intermediate. The segment at Arg318–Tyr319 is interaction with tRNA.

It belongs to the MnmA/TRMU family.

The protein resides in the cytoplasm. It catalyses the reaction S-sulfanyl-L-cysteinyl-[protein] + uridine(34) in tRNA + AH2 + ATP = 2-thiouridine(34) in tRNA + L-cysteinyl-[protein] + A + AMP + diphosphate + H(+). Functionally, catalyzes the 2-thiolation of uridine at the wobble position (U34) of tRNA, leading to the formation of s(2)U34. The sequence is that of tRNA-specific 2-thiouridylase MnmA from Polynucleobacter asymbioticus (strain DSM 18221 / CIP 109841 / QLW-P1DMWA-1) (Polynucleobacter necessarius subsp. asymbioticus).